Consider the following 168-residue polypeptide: Lipoprotein signal peptidase (168 aa).

The next 3 helical transmembrane spans lie at 15 to 35 (AIAAVTVVLDQISKLWILGLL), 69 to 89 (WGRWLLIGFSILVVIGLAVWV), and 95 to 115 (PLLAVGIGLIIGGAIGNNLID). Residues D124 and D141 contribute to the active site. A helical transmembrane segment spans residues 133–153 (FPWVFNIADSGISVGVALLLL).

This sequence belongs to the peptidase A8 family.

It is found in the cell inner membrane. The catalysed reaction is Release of signal peptides from bacterial membrane prolipoproteins. Hydrolyzes -Xaa-Yaa-Zaa-|-(S,diacylglyceryl)Cys-, in which Xaa is hydrophobic (preferably Leu), and Yaa (Ala or Ser) and Zaa (Gly or Ala) have small, neutral side chains.. It participates in protein modification; lipoprotein biosynthesis (signal peptide cleavage). In terms of biological role, this protein specifically catalyzes the removal of signal peptides from prolipoproteins. This chain is Lipoprotein signal peptidase, found in Caulobacter vibrioides (strain ATCC 19089 / CIP 103742 / CB 15) (Caulobacter crescentus).